The chain runs to 195 residues: MRLCDTDIERYLDDGIISLTPRPNNDKINGATIDVRLGNSFRVFREHSAPFIDLSGPKEEVSAQLESVMSDEIIIPEGEAFFLHPGTLALATTLESVKLPANIIGWLDGRSSLARLGLMVHVTAHRIDPGWEGKIVLEFYNSGKLPLALRPNMVIGALSFEVLSGEXKRPYSSRKDAKYKNQQSAVASRIDEDKE.

Residues 110 to 115 (RSSLAR), aspartate 128, 136 to 138 (VLE), tyrosine 171, lysine 178, and glutamine 182 contribute to the dCTP site. Glutamate 138 functions as the Proton donor/acceptor in the catalytic mechanism. The tract at residues 171–195 (YSSRKDAKYKNQQSAVASRIDEDKE) is disordered.

This sequence belongs to the dCTP deaminase family. As to quaternary structure, homotrimer.

It catalyses the reaction dCTP + H2O + H(+) = dUTP + NH4(+). The protein operates within pyrimidine metabolism; dUMP biosynthesis; dUMP from dCTP (dUTP route): step 1/2. Functionally, catalyzes the deamination of dCTP to dUTP. The sequence is that of dCTP deaminase from Haemophilus influenzae (strain ATCC 51907 / DSM 11121 / KW20 / Rd).